Reading from the N-terminus, the 684-residue chain is Glycine--tRNA ligase beta subunit (684 aa).

This sequence belongs to the class-II aminoacyl-tRNA synthetase family. As to quaternary structure, tetramer of two alpha and two beta subunits.

The protein resides in the cytoplasm. It catalyses the reaction tRNA(Gly) + glycine + ATP = glycyl-tRNA(Gly) + AMP + diphosphate. This chain is Glycine--tRNA ligase beta subunit, found in Stutzerimonas stutzeri (strain A1501) (Pseudomonas stutzeri).